Here is a 375-residue protein sequence, read N- to C-terminus: S-adenosylmethionine:tRNA ribosyltransferase-isomerase (375 aa).

It belongs to the QueA family. In terms of assembly, monomer.

It localises to the cytoplasm. The catalysed reaction is 7-aminomethyl-7-carbaguanosine(34) in tRNA + S-adenosyl-L-methionine = epoxyqueuosine(34) in tRNA + adenine + L-methionine + 2 H(+). The protein operates within tRNA modification; tRNA-queuosine biosynthesis. Transfers and isomerizes the ribose moiety from AdoMet to the 7-aminomethyl group of 7-deazaguanine (preQ1-tRNA) to give epoxyqueuosine (oQ-tRNA). The chain is S-adenosylmethionine:tRNA ribosyltransferase-isomerase from Rickettsia typhi (strain ATCC VR-144 / Wilmington).